The following is a 400-amino-acid chain: Enolase (400 aa).

Gln-154 serves as a coordination point for (2R)-2-phosphoglycerate. Glu-197 acts as the Proton donor in catalysis. Residues Asp-233, Glu-274, and Asp-301 each contribute to the Mg(2+) site. (2R)-2-phosphoglycerate contacts are provided by Lys-326, Arg-355, Ser-356, and Lys-377. The Proton acceptor role is filled by Lys-326.

It belongs to the enolase family. It depends on Mg(2+) as a cofactor.

The protein localises to the cytoplasm. It is found in the secreted. The protein resides in the cell surface. It carries out the reaction (2R)-2-phosphoglycerate = phosphoenolpyruvate + H2O. It functions in the pathway carbohydrate degradation; glycolysis; pyruvate from D-glyceraldehyde 3-phosphate: step 4/5. Catalyzes the reversible conversion of 2-phosphoglycerate (2-PG) into phosphoenolpyruvate (PEP). It is essential for the degradation of carbohydrates via glycolysis. This Picrophilus torridus (strain ATCC 700027 / DSM 9790 / JCM 10055 / NBRC 100828 / KAW 2/3) protein is Enolase.